The primary structure comprises 506 residues: Maturase K (506 aa).

The protein belongs to the intron maturase 2 family. MatK subfamily.

It localises to the plastid. The protein localises to the chloroplast. In terms of biological role, usually encoded in the trnK tRNA gene intron. Probably assists in splicing its own and other chloroplast group II introns. This chain is Maturase K, found in Hydrangea macrophylla (Bigleaf hydrangea).